Reading from the N-terminus, the 177-residue chain is ATP synthase subunit delta (177 aa).

It belongs to the ATPase delta chain family. F-type ATPases have 2 components, F(1) - the catalytic core - and F(0) - the membrane proton channel. F(1) has five subunits: alpha(3), beta(3), gamma(1), delta(1), epsilon(1). F(0) has three main subunits: a(1), b(2) and c(10-14). The alpha and beta chains form an alternating ring which encloses part of the gamma chain. F(1) is attached to F(0) by a central stalk formed by the gamma and epsilon chains, while a peripheral stalk is formed by the delta and b chains.

It is found in the cell inner membrane. Functionally, f(1)F(0) ATP synthase produces ATP from ADP in the presence of a proton or sodium gradient. F-type ATPases consist of two structural domains, F(1) containing the extramembraneous catalytic core and F(0) containing the membrane proton channel, linked together by a central stalk and a peripheral stalk. During catalysis, ATP synthesis in the catalytic domain of F(1) is coupled via a rotary mechanism of the central stalk subunits to proton translocation. This protein is part of the stalk that links CF(0) to CF(1). It either transmits conformational changes from CF(0) to CF(1) or is implicated in proton conduction. The polypeptide is ATP synthase subunit delta (Neisseria gonorrhoeae (strain ATCC 700825 / FA 1090)).